Consider the following 88-residue polypeptide: Large ribosomal subunit protein bL27 (88 aa).

Residues 1–24 (MAHKKGTGSTRNGRDSNSKRLGVK) form a disordered region.

The protein belongs to the bacterial ribosomal protein bL27 family.

In Prochlorococcus marinus (strain MIT 9313), this protein is Large ribosomal subunit protein bL27.